The chain runs to 296 residues: Telomere repeat-binding factor 4 (296 aa).

Positions 1–62 (MGNQKLKWTA…WRNLSVAPGI (62 aa)) constitute an HTH myb-type domain. A DNA-binding region (H-T-H motif) is located at residues 28 to 58 (WKNILRDPELAEQLSSRSNIDLKDKWRNLSV). In terms of domain architecture, H15 spans 126–200 (NAPRYDGMIF…STQNFYKMND (75 aa)). Residues 197–232 (KMNDNSLVQRTPHVARPKESNTKSRQQTNSQGPSIS) form a disordered region. Over residues 219–232 (KSRQQTNSQGPSIS) the composition is skewed to polar residues. A coiled-coil region spans residues 245 to 282 (KLVEVENKLDVSKGAAEEIERLMKLAEEADEMLVIARE).

This sequence belongs to the histone H1/H5 family. SMH subfamily.

The protein resides in the nucleus. It localises to the chromosome. In terms of biological role, binds preferentially double-stranded telomeric repeats. The sequence is that of Telomere repeat-binding factor 4 from Arabidopsis thaliana (Mouse-ear cress).